We begin with the raw amino-acid sequence, 247 residues long: Proteasome subunit alpha type-7-B (247 aa).

It belongs to the peptidase T1A family. As to quaternary structure, the 26S proteasome consists of a 20S proteasome core and two 19S regulatory subunits. The 20S proteasome core is composed of 28 subunits that are arranged in four stacked rings, resulting in a barrel-shaped structure. The two end rings are each formed by seven alpha subunits, and the two central rings are each formed by seven beta subunits. The catalytic chamber with the active sites is on the inside of the barrel. Phosphorylated in G2 phase.

The protein localises to the cytoplasm. It is found in the nucleus. The proteasome is a multicatalytic proteinase complex which is characterized by its ability to cleave peptides with Arg, Phe, Tyr, Leu, and Glu adjacent to the leaving group at neutral or slightly basic pH. The proteasome has an ATP-dependent proteolytic activity. This is Proteasome subunit alpha type-7-B (psma7-b) from Xenopus laevis (African clawed frog).